The primary structure comprises 146 residues: uncharacterized protein (146 aa).

This is an uncharacterized protein from Bacillus subtilis (strain 168).